Reading from the N-terminus, the 400-residue chain is Subtilisin-like protease 7 (400 aa).

The first 20 residues, 1 to 20 (MGFITKAIPLALAAASVING), serve as a signal peptide directing secretion. Residues 21–119 (AEIMETRAGV…IERDARVQIN (99 aa)) constitute a propeptide that is removed on maturation. The region spanning 36–118 (KYIVVMNDGM…YIERDARVQI (83 aa)) is the Inhibitor I9 domain. Residue asparagine 58 is glycosylated (N-linked (GlcNAc...) asparagine). The Peptidase S8 domain maps to 129–400 (SWGLARVGSK…SKLINNGSGM (272 aa)). Catalysis depends on charge relay system residues aspartate 161 and histidine 192. Residues asparagine 222 and asparagine 252 are each glycosylated (N-linked (GlcNAc...) asparagine). Serine 346 acts as the Charge relay system in catalysis. Residue asparagine 396 is glycosylated (N-linked (GlcNAc...) asparagine).

This sequence belongs to the peptidase S8 family.

It localises to the secreted. In terms of biological role, secreted subtilisin-like serine protease with keratinolytic activity that contributes to pathogenicity. In Trichophyton verrucosum (Cattle ringworm fungus), this protein is Subtilisin-like protease 7 (SUB7).